The primary structure comprises 87 residues: Keratin-associated protein 19-1 (87 aa).

The 21 X 2 AA repeats of G-[YCGS] stretch occupies residues 6-72; the sequence is GYSGGLGYGY…SSYGGYGCGC (67 aa).

This sequence belongs to the KRTAP type 19 family. In terms of assembly, interacts with hair keratins. Strong expression in narrowly defined pattern restricted to the lower and middle cortical regions of the hair shaft in both developing and cycling hair. During hair follicle regression (catagen), expression levels decrease until expression is no longer detectable in follicles at resting stage (telogen).

Its function is as follows. In the hair cortex, hair keratin intermediate filaments are embedded in an interfilamentous matrix, consisting of hair keratin-associated proteins (KRTAP), which are essential for the formation of a rigid and resistant hair shaft through their extensive disulfide bond cross-linking with abundant cysteine residues of hair keratins. The matrix proteins include the high-sulfur and high-glycine-tyrosine keratins. The sequence is that of Keratin-associated protein 19-1 (Krtap19-1) from Mus musculus (Mouse).